The chain runs to 763 residues: Ethylene receptor 2 (763 aa).

3 helical membrane passes run 58–78 (FLIA…ATCS), 86–106 (IVLQ…ITMF), and 115–135 (VVLA…ATAI). Residues Cys97 and His101 each contribute to the Cu cation site. In terms of domain architecture, GAF spans 190–339 (DRHTILYTTM…VVADQVAVAL (150 aa)). The Histidine kinase domain maps to 382 to 615 (AMYDGMRRPM…TIMLALQFQL (234 aa)). The region spanning 641–760 (QVILVDSDDT…ALGDELYRVL (120 aa)) is the Response regulatory domain. 4-aspartylphosphate is present on Asp692.

It belongs to the ethylene receptor family. Cu cation serves as cofactor. As to expression, expressed in anthers and hulls.

It is found in the endoplasmic reticulum membrane. It catalyses the reaction ATP + protein L-histidine = ADP + protein N-phospho-L-histidine.. Its function is as follows. Ethylene receptor related to bacterial two-component regulators. Acts as a negative regulator of ethylene signaling. May delay the transition from the vegetative stage to the floral stage by up-regulating GI (GIGANTEA) and RCN1 and cause starch accumulation in stems by down-regulating the alpha-amylase AMY3D. The polypeptide is Ethylene receptor 2 (Oryza sativa subsp. indica (Rice)).